Reading from the N-terminus, the 714-residue chain is Polyribonucleotide nucleotidyltransferase (714 aa).

Mg(2+) contacts are provided by Asp488 and Asp494. In terms of domain architecture, KH spans 555–614 (PRIEVMNIPVDKIREVIGSGGKVIREIVEKTGAKINIDDDGTVKIASASGKEIEAARKWI). The region spanning 624–692 (GQVYEGTVVK…ERGKVRLSMK (69 aa)) is the S1 motif domain.

Belongs to the polyribonucleotide nucleotidyltransferase family. It depends on Mg(2+) as a cofactor.

The protein localises to the cytoplasm. It carries out the reaction RNA(n+1) + phosphate = RNA(n) + a ribonucleoside 5'-diphosphate. Functionally, involved in mRNA degradation. Catalyzes the phosphorolysis of single-stranded polyribonucleotides processively in the 3'- to 5'-direction. The chain is Polyribonucleotide nucleotidyltransferase from Sinorhizobium medicae (strain WSM419) (Ensifer medicae).